The chain runs to 180 residues: Sec-independent protein translocase protein TatB (180 aa).

The chain crosses the membrane as a helical span at residues 1–21; the sequence is MFDIGWSELLVIGVVALIAIG. Residues 77 to 180 form a disordered region; that stretch reads TRGDLMTRLT…DQTARGAKAS (104 aa). The span at 105 to 129 shows a compositional bias: low complexity; that stretch reads ADKPSVSSDAASASGSAAPEAGAAE.

This sequence belongs to the TatB family. In terms of assembly, the Tat system comprises two distinct complexes: a TatABC complex, containing multiple copies of TatA, TatB and TatC subunits, and a separate TatA complex, containing only TatA subunits. Substrates initially bind to the TatABC complex, which probably triggers association of the separate TatA complex to form the active translocon.

The protein resides in the cell inner membrane. Part of the twin-arginine translocation (Tat) system that transports large folded proteins containing a characteristic twin-arginine motif in their signal peptide across membranes. Together with TatC, TatB is part of a receptor directly interacting with Tat signal peptides. TatB may form an oligomeric binding site that transiently accommodates folded Tat precursor proteins before their translocation. This Nitrobacter winogradskyi (strain ATCC 25391 / DSM 10237 / CIP 104748 / NCIMB 11846 / Nb-255) protein is Sec-independent protein translocase protein TatB.